We begin with the raw amino-acid sequence, 271 residues long: Thioredoxin-related transmembrane protein 2 homolog (271 aa).

The signal sequence occupies residues 1-28; the sequence is MTWKKQMALLAKPYYWVNILLAISYLLA. Topologically, residues 29–102 are extracellular; that stretch reads KKTQFICTRL…AILWAYADFR (74 aa). Residues 103–123 traverse the membrane as a helical segment; it reads YGLGFLLLCVLVGMVLPEPSY. In terms of domain architecture, Thioredoxin spans 112–262; sequence VLVGMVLPEP…YKEAIERLPI (151 aa). Residues 124–271 lie on the Cytoplasmic side of the membrane; sequence RGPEHITYFR…IAPKEAKKVQ (148 aa). The Di-lysine motif signature appears at 268–271; sequence KKVQ.

It localises to the membrane. In Drosophila melanogaster (Fruit fly), this protein is Thioredoxin-related transmembrane protein 2 homolog.